Reading from the N-terminus, the 90-residue chain is UPF0367 protein Npun_R4552 (90 aa).

This sequence belongs to the UPF0367 family.

This Nostoc punctiforme (strain ATCC 29133 / PCC 73102) protein is UPF0367 protein Npun_R4552.